Reading from the N-terminus, the 439-residue chain is ATP-dependent RNA helicase RhlB (439 aa).

A Q motif motif is present at residues 9 to 37 (QKFADLPLHPEVKQALAENGFEFCTPIQA). The 180-residue stretch at 40–219 (LPVLLQSKDI…YDHMNDPVKV (180 aa)) folds into the Helicase ATP-binding domain. 53–60 (AQTGTGKT) is an ATP binding site. The DEAD box signature appears at 165 to 168 (DEAD). The Helicase C-terminal domain occupies 243–390 (KIRLLLTLIE…VSNYDRDALL (148 aa)). Residues 395 to 439 (PPVKIHRKHPAGARNLRERSGAGRPQGAHRSGGRPPRHDRTRRQP) are disordered. Positions 425-439 (SGGRPPRHDRTRRQP) are enriched in basic residues.

It belongs to the DEAD box helicase family. RhlB subfamily. In terms of assembly, component of the RNA degradosome, which is a multiprotein complex involved in RNA processing and mRNA degradation.

Its subcellular location is the cytoplasm. It catalyses the reaction ATP + H2O = ADP + phosphate + H(+). In terms of biological role, DEAD-box RNA helicase involved in RNA degradation. Has RNA-dependent ATPase activity and unwinds double-stranded RNA. The protein is ATP-dependent RNA helicase RhlB of Shewanella sp. (strain MR-4).